The chain runs to 876 residues: Leucine--tRNA ligase (876 aa).

Positions Pro42 to His52 match the 'HIGH' region motif. A 'KMSKS' region motif is present at residues Lys634–Ser638. Lys637 contributes to the ATP binding site.

The protein belongs to the class-I aminoacyl-tRNA synthetase family.

The protein localises to the cytoplasm. The catalysed reaction is tRNA(Leu) + L-leucine + ATP = L-leucyl-tRNA(Leu) + AMP + diphosphate. This Neisseria meningitidis serogroup C / serotype 2a (strain ATCC 700532 / DSM 15464 / FAM18) protein is Leucine--tRNA ligase.